Here is a 442-residue protein sequence, read N- to C-terminus: tRNA(Ile)-lysidine synthase (442 aa).

30-35 (SGGLDS) lines the ATP pocket.

Belongs to the tRNA(Ile)-lysidine synthase family.

The protein resides in the cytoplasm. It carries out the reaction cytidine(34) in tRNA(Ile2) + L-lysine + ATP = lysidine(34) in tRNA(Ile2) + AMP + diphosphate + H(+). Its function is as follows. Ligates lysine onto the cytidine present at position 34 of the AUA codon-specific tRNA(Ile) that contains the anticodon CAU, in an ATP-dependent manner. Cytidine is converted to lysidine, thus changing the amino acid specificity of the tRNA from methionine to isoleucine. The polypeptide is tRNA(Ile)-lysidine synthase (Pseudomonas fluorescens (strain Pf0-1)).